The sequence spans 136 residues: uncharacterized protein (136 aa).

It is found in the mitochondrion. This is an uncharacterized protein from Marchantia polymorpha (Common liverwort).